The chain runs to 369 residues: Glutamate 5-kinase (369 aa).

Lysine 14 contributes to the ATP binding site. Substrate-binding residues include serine 56, aspartate 143, and asparagine 155. Residues 175–176 (SD) and 215–221 (TGGMASK) each bind ATP. The PUA domain occupies 277 to 351 (AGKIRLDQGA…GMKTQELPDD (75 aa)).

This sequence belongs to the glutamate 5-kinase family.

It is found in the cytoplasm. The catalysed reaction is L-glutamate + ATP = L-glutamyl 5-phosphate + ADP. The protein operates within amino-acid biosynthesis; L-proline biosynthesis; L-glutamate 5-semialdehyde from L-glutamate: step 1/2. In terms of biological role, catalyzes the transfer of a phosphate group to glutamate to form L-glutamate 5-phosphate. This is Glutamate 5-kinase from Corynebacterium efficiens (strain DSM 44549 / YS-314 / AJ 12310 / JCM 11189 / NBRC 100395).